We begin with the raw amino-acid sequence, 1078 residues long: Extracellular calcium-sensing receptor (1078 aa).

Positions 1–19 are cleaved as a signal peptide; the sequence is MAFYSCCWVLLALTWHTSA. Topologically, residues 20 to 610 are extracellular; it reads YGPDQRAQKK…KEIEFLSWTE (591 aa). The ligand-binding 1 (LB1) stretch occupies residues 22 to 188; that stretch reads PDQRAQKKGD…QFKSFLRTIP (167 aa). A disulfide bridge connects residues cysteine 60 and cysteine 101. 66–70 lines the phosphate pocket; that stretch reads RGFRW. Residues isoleucine 81, serine 84, leucine 87, and leucine 88 each contribute to the Ca(2+) site. Asparagine 90 carries an N-linked (GlcNAc...) asparagine glycan. Threonine 100 serves as a coordination point for Ca(2+). A glycan (N-linked (GlcNAc...) asparagine) is linked at asparagine 130. Residue threonine 145 coordinates Ca(2+). Residues serine 147, alanine 168, and serine 170 each coordinate L-tryptophan. Residues serine 170, proline 188, aspartate 190, glutamate 231, and aspartate 234 each contribute to the Ca(2+) site. Residues 189-324 are ligand-binding 2 (LB2); that stretch reads NDEHQATAMA…GGTIGFALKA (136 aa). 7 cysteine pairs are disulfide-bonded: cysteine 236-cysteine 561, cysteine 358-cysteine 395, cysteine 437-cysteine 449, cysteine 542-cysteine 562, cysteine 546-cysteine 565, cysteine 568-cysteine 582, and cysteine 585-cysteine 598. Spermine-binding residues include aspartate 238 and serine 240. Asparagine 261 and asparagine 287 each carry an N-linked (GlcNAc...) asparagine glycan. Glutamate 297 contacts Ca(2+). Position 297 (glutamate 297) interacts with L-tryptophan. N-linked (GlcNAc...) asparagine glycans are attached at residues asparagine 386 and asparagine 400. Residue 415-417 coordinates phosphate; that stretch reads RIS. N-linked (GlcNAc...) asparagine glycosylation is found at asparagine 446, asparagine 468, and asparagine 488. Tyrosine 489 provides a ligand contact to Ca(2+). Residue asparagine 541 is glycosylated (N-linked (GlcNAc...) asparagine). The interval 542-612 is cysteine-rich (CR); the sequence is CSRDCLAGTR…IEFLSWTEPF (71 aa). Glycine 557 is a Ca(2+) binding site. An N-linked (GlcNAc...) asparagine glycan is attached at asparagine 594. The helical transmembrane segment at 611 to 636 threads the bilayer; the sequence is PFGIALTLFAVLGIFLTAFVLGVFIK. Topologically, residues 637–648 are cytoplasmic; the sequence is FRNTPIVKATNR. Residues 637 to 648 form an intracellular loop 1 (ICL1) region; that stretch reads FRNTPIVKATNR. A helical transmembrane segment spans residues 649-668; the sequence is ELSYLLLFSLLCCFSSSLFF. The Extracellular portion of the chain corresponds to 669–674; that stretch reads IGEPQD. Residues 675–698 traverse the membrane as a helical segment; that stretch reads WTCRLRQPAFGISFVLCISCILVK. Over 699-722 the chain is Cytoplasmic; it reads TNRVLLVFEAKIPTSFHRKWWGLN. The tract at residues 699 to 722 is intracellular loop 2 (ICL2); that stretch reads TNRVLLVFEAKIPTSFHRKWWGLN. A helical membrane pass occupies residues 723–745; it reads LQFLLVFLCTFMQIVICVIWLYT. Residues 746-769 lie on the Extracellular side of the membrane; sequence APPSSYRNQELEDEIIFITCHEGS. A helical transmembrane segment spans residues 770 to 789; it reads LMALGFLIGYTCLLAAICFF. At 790–805 the chain is on the cytoplasmic side; that stretch reads FAFKSRKLPENFNEAK. Positions 790–805 are intracellular loop 3 (ICL3); that stretch reads FAFKSRKLPENFNEAK. A helical transmembrane segment spans residues 806-828; it reads FITFSMLIFFIVWISFIPAYAST. The Extracellular portion of the chain corresponds to 829–832; sequence YGKF. Residues 833–854 traverse the membrane as a helical segment; that stretch reads VSAVEVIAILAASFGLLACIFF. At 855 to 1078 the chain is on the cytoplasmic side; it reads NKIYIILFKP…STVTENVVNS (224 aa). The interval 855 to 1078 is C-terminus; the sequence is NKIYIILFKP…STVTENVVNS (224 aa). The segment at 880-900 is interaction with RNF19A; the sequence is AFKVAARATLRRSNVSRKRSS. A Phosphothreonine; by PKC modification is found at threonine 888. The arginine-rich retention motif stretch occupies residues 890–898; sequence RRSNVSRKR. Serine 892 is subject to Phosphoserine; by PKC. Disordered regions lie at residues 892-963, 986-1006, and 1030-1055; these read SNVS…PRCK, AMAH…SSDT, and TGLQ…PALV. Serine 899 is modified (phosphoserine; by PKA). The span at 900 to 918 shows a compositional bias: low complexity; it reads SSLGGSTGSTPSSSISSKS. Position 920 is a phosphoserine (serine 920). Over residues 932 to 960 the composition is skewed to low complexity; the sequence is QQQPLALTQQEQQQQPLTLPQQQRSQQQP. A compositionally biased stretch (polar residues) spans 993–1006; sequence THQNSLEAQKSSDT. Residue serine 1061 is modified to Phosphoserine.

It belongs to the G-protein coupled receptor 3 family. Homodimer; disulfide-linked. Interacts with VCP. Interacts with ARRB1. Phosphorylation at Thr-888 by PKC impairs coupling with G(q)/G(11) G-proteins, while it does not affect G(i)/G(o)-coupling. Phosphorylation at Ser-892 by PKC and Ser-899 by PKA promote plasma membrane localization. In terms of processing, ubiquitinated by RNF19A; which induces proteasomal degradation. Post-translationally, N-glycosylated. In terms of tissue distribution, expressed in the temporal lobe, frontal lobe, parietal lobe, hippocampus, and cerebellum. Also found in kidney, lung, liver, heart, skeletal muscle, placenta.

Its subcellular location is the cell membrane. Its activity is regulated as follows. In resting state, adopts an open conformation, anion-binding promoting the inactive configuration. Upon aromatic amino acid-binding, the groove in the extracellular venus flytrap module is closed, thereby inducing the formation of a novel homodimer interface between subunits. Calcium ions stabilize the active state by enhancing homodimer interactions between membrane-proximal domains to fully activate the receptor. Upon activation, the homodimer adopts an asymmetric configuration of the 7-transmembrane region that primes one protomer for G-protein coupling. G-protein binding expands the transmembrane dimer interface; the restriction imposed by the receptor dimer, in combination with intracellular loop 2 (ICL2), enables G-protein activation by facilitating conformational transition of G-protein alpha. Coupling to different classes of G-proteins results in distinct CASR-G-protein interfaces. Activated by glucose, which acts as a positive allosteric modulator. Activated by positive allosteric modulator drugs cinacalcet, evocalcet and etelcalcetide, which are clinically used for the treatment of hyperparathyroidism and familial hypocalciuric hypercalcemia. Inhibited by NPS-2143, a negative allosteric modulator tested for the treatment of hypocalcemia. Activated by velcalcetide (AMG 416), a D-amino acid-containing peptide agonist that is being evaluated for the treatment of secondary hyperparathyroidism in chronic kidney disease patients receiving hemodialysis. Velcalcetide agonist acts by forming a disulfide bond with Cys-482. In terms of biological role, G-protein-coupled receptor that senses changes in the extracellular concentration of calcium ions and plays a key role in maintaining calcium homeostasis. Senses fluctuations in the circulating calcium concentration: activated by elevated circulating calcium, leading to decreased parathyroid hormone (PTH) secretion in parathyroid glands. In kidneys, acts as a key regulator of renal tubular calcium resorption. Ligand binding causes a conformation change that triggers signaling via guanine nucleotide-binding proteins (G-proteins) and modulates the activity of downstream effectors. CASR is coupled with different G(q)/G(11), G(i)/G(o)- or G(s)-classes of G-proteins depending on the context. In the parathyroid and kidney, CASR signals through G(q)/G(11) and G(i)/G(o) G-proteins: G(q)/G(11) coupling activates phospholipase C-beta, releasing diacylglycerol (DAG) and inositol 1,4,5-trisphosphate (IP3) second messengers, while G(i)/G(o) coupling mediates inhibition of adenylate cyclase activity. The G-protein-coupled receptor activity is activated by a co-agonist mechanism: aromatic amino acids, such as Trp or Phe, act concertedly with divalent cations, such as calcium or magnesium, to achieve full receptor activation. Acts as an activator of the NLRP3 inflammasome via G(i)/G(o)-mediated signaling: down-regulation of cyclic AMP (cAMP) relieving NLRP3 inhibition by cAMP. Acts as a regulator of proton-sensing receptor GPR68 in a seesaw manner: CASR-mediated signaling inhibits GPR68 signaling in response to extracellular calcium, while GPR68 inhibits CASR in presence of extracellular protons. The sequence is that of Extracellular calcium-sensing receptor from Homo sapiens (Human).